The following is a 382-amino-acid chain: 3-isopropylmalate dehydrogenase (382 aa).

91–102 provides a ligand contact to NAD(+); sequence GPKWGTGSVRPE. Substrate is bound by residues arginine 109, arginine 119, arginine 148, and aspartate 240. 3 residues coordinate Mg(2+): aspartate 240, aspartate 265, and aspartate 269. Residue 304–315 coordinates NAD(+); that stretch reads GSAPDLTENKVN.

It belongs to the isocitrate and isopropylmalate dehydrogenases family. In terms of assembly, homodimer. Mg(2+) serves as cofactor. It depends on Mn(2+) as a cofactor.

The protein resides in the cytoplasm. The enzyme catalyses (2R,3S)-3-isopropylmalate + NAD(+) = 4-methyl-2-oxopentanoate + CO2 + NADH. The protein operates within amino-acid biosynthesis; L-leucine biosynthesis; L-leucine from 3-methyl-2-oxobutanoate: step 3/4. Catalyzes the oxidation of 3-carboxy-2-hydroxy-4-methylpentanoate (3-isopropylmalate) to 3-carboxy-4-methyl-2-oxopentanoate. The product decarboxylates to 4-methyl-2 oxopentanoate. The sequence is that of 3-isopropylmalate dehydrogenase (LEU2) from Debaryomyces hansenii (strain ATCC 36239 / CBS 767 / BCRC 21394 / JCM 1990 / NBRC 0083 / IGC 2968) (Yeast).